Reading from the N-terminus, the 526-residue chain is Peptide chain release factor 3 (526 aa).

The 269-residue stretch at 9–277 folds into the tr-type G domain; that stretch reads DKRRTFAIIS…GIVEWAPKPL (269 aa). Residues 18 to 25, 86 to 90, and 140 to 143 each bind GTP; these read SHPDAGKT, DTPGH, and NKLD.

This sequence belongs to the TRAFAC class translation factor GTPase superfamily. Classic translation factor GTPase family. PrfC subfamily.

It is found in the cytoplasm. Increases the formation of ribosomal termination complexes and stimulates activities of RF-1 and RF-2. It binds guanine nucleotides and has strong preference for UGA stop codons. It may interact directly with the ribosome. The stimulation of RF-1 and RF-2 is significantly reduced by GTP and GDP, but not by GMP. The protein is Peptide chain release factor 3 of Shewanella sp. (strain MR-4).